Here is a 345-residue protein sequence, read N- to C-terminus: MHHNVFTNNPTVPIDVKNRSVSELMDGMLKTGFQGRKLAESVQAWNNMLKEKNTTVFMGLSGAMVPAGMRRIISHMIRERMIDCLVSTGANLFHDCHEALGRKHYVGSHLANDEKLFEQGVDRIYDIFAVEEEFRTADNLIADFAQEIGEITCSSREFMYLLGKELGRRGAAEDSIVVSAYRHNVPIFVPALSDSSIGIGLTIARRRGLKLEIDQIKDVDEITQIVEKSERTGVVYVGGGVPKNFIQQTEVIASILGMDIGGHDYAIQYTSDSPHWGGLSGCTFDEAVSWGKIAPQAKKVQVFVDATIALPIVAHALHEKTHDLKRIAPVFFWDGPEGLAIDYKE.

Lys-292 serves as the catalytic Nucleophile.

This sequence belongs to the deoxyhypusine synthase family. Requires NAD(+) as cofactor.

It catalyses the reaction [eIF5A protein]-L-lysine + spermidine = [eIF5A protein]-deoxyhypusine + propane-1,3-diamine. Its pathway is protein modification; eIF5A hypusination. Its function is as follows. Catalyzes the NAD-dependent oxidative cleavage of spermidine and the subsequent transfer of the butylamine moiety of spermidine to the epsilon-amino group of a specific lysine residue of the eIF-5A precursor protein to form the intermediate deoxyhypusine residue. The protein is Probable deoxyhypusine synthase 2 (dys2) of Methanosarcina acetivorans (strain ATCC 35395 / DSM 2834 / JCM 12185 / C2A).